The following is a 431-amino-acid chain: CCA tRNA nucleotidyltransferase 1, mitochondrial (431 aa).

A mitochondrion-targeting transit peptide spans 1–31; the sequence is MWAKLFLRPSFVNRVHLTWSCRALLTMQLKT. ATP is bound by residues Gly-61 and Arg-64. CTP is bound by residues Gly-61 and Arg-64. 2 residues coordinate Mg(2+): Asp-74 and Asp-76. Arg-148, Asp-191, Arg-194, Arg-197, and Arg-200 together coordinate ATP. Residues Arg-148, Asp-191, Arg-194, Arg-197, and Arg-200 each coordinate CTP.

It belongs to the tRNA nucleotidyltransferase/poly(A) polymerase family. As to quaternary structure, monomer, and homodimer. Requires Mg(2+) as cofactor. In terms of tissue distribution, expressed ubiquitously during early embryogenesis.

It is found in the mitochondrion. Its subcellular location is the cytoplasm. The protein resides in the nucleus. The catalysed reaction is a tRNA precursor + 2 CTP + ATP = a tRNA with a 3' CCA end + 3 diphosphate. It carries out the reaction a tRNA with a 3' CCA end + 2 CTP + ATP = a tRNA with a 3' CCACCA end + 3 diphosphate. In terms of biological role, nucleotidyltransferase that catalyzes the addition and repair of the essential 3'-terminal CCA sequence in tRNAs, which is necessary for the attachment of amino acids to the 3' terminus of tRNA molecules, using CTP and ATP as substrates. tRNA 3'-terminal CCA addition is required both for tRNA processing and repair. Promotes tRNA repair and recycling downstream of the ribosome-associated quality control (RQC) pathway by mediating addition of the tRNA 3'-terminal CCA following cleavage by ankzf1 and repair by elac1. Also involved in tRNA surveillance by mediating tandem CCA addition to generate a CCACCA at the 3' terminus of unstable tRNAs and tRNA-like transcripts. While stable tRNAs receive only 3'-terminal CCA, unstable tRNAs beginning with GG are marked with CCACCA and rapidly degraded. The structural flexibility of RNA controls the choice between CCA versus CCACCA addition: following the first CCA addition cycle, nucleotide-binding to the active site triggers a clockwise screw motion, producing torque on the RNA. This ejects stable RNAs, whereas unstable RNAs are refolded while bound to the enzyme and subjected to a second CCA catalytic cycle. The chain is CCA tRNA nucleotidyltransferase 1, mitochondrial from Danio rerio (Zebrafish).